A 371-amino-acid chain; its full sequence is MDFQLQATDNNARAGLLNLAHSQVATPVFMPVGTQGCIKSLDATDAQEILGAKLILANTYHMYLRPGEKVVEELGGLHRFAQFYGSFLTDSGGFQAFSLSDNVKLQEDGIVFKSHIDGSKHLFTPAKVLDIQYSLNSDIMMVLDDLVGLPAPLKRLEESIKRSAKWANMSLEYHKEKNRPSNNLFAIIQGGTHLKMRSLSVGLTHEGFDGYAIGGLAVGESADEMLETIAHTAPLLPKDKPRYLMGVGTPENILDAISLGVDMFDCVMPTRNARNATLFTHSGKISIKNAPYKLDNTPIEENCACYACKRYSKAYLHHLFRAKELTYARLASLHNLHFYLELVKNARNAILEKRFLSFKKEFLEKYNSRSH.

Asp-90 serves as the catalytic Nucleophile. Asp-90 acts as the Proton acceptor in catalysis. Residues 90–94 (DSGGF), Ser-91, Asp-144, Gln-189, and Gly-215 contribute to the substrate site. The segment at 246-252 (GVGTPEN) is RNA binding. The active-site Nucleophile is the Asp-265. Positions 270-274 (TRNAR) are RNA binding; important for wobble base 34 recognition. Zn(2+)-binding residues include Cys-303, Cys-305, Cys-308, and His-334.

This sequence belongs to the queuine tRNA-ribosyltransferase family. Homodimer. Within each dimer, one monomer is responsible for RNA recognition and catalysis, while the other monomer binds to the replacement base PreQ1. Zn(2+) serves as cofactor.

It carries out the reaction 7-aminomethyl-7-carbaguanine + guanosine(34) in tRNA = 7-aminomethyl-7-carbaguanosine(34) in tRNA + guanine. It functions in the pathway tRNA modification; tRNA-queuosine biosynthesis. Catalyzes the base-exchange of a guanine (G) residue with the queuine precursor 7-aminomethyl-7-deazaguanine (PreQ1) at position 34 (anticodon wobble position) in tRNAs with GU(N) anticodons (tRNA-Asp, -Asn, -His and -Tyr). Catalysis occurs through a double-displacement mechanism. The nucleophile active site attacks the C1' of nucleotide 34 to detach the guanine base from the RNA, forming a covalent enzyme-RNA intermediate. The proton acceptor active site deprotonates the incoming PreQ1, allowing a nucleophilic attack on the C1' of the ribose to form the product. After dissociation, two additional enzymatic reactions on the tRNA convert PreQ1 to queuine (Q), resulting in the hypermodified nucleoside queuosine (7-(((4,5-cis-dihydroxy-2-cyclopenten-1-yl)amino)methyl)-7-deazaguanosine). The chain is Queuine tRNA-ribosyltransferase from Helicobacter pylori (strain ATCC 700392 / 26695) (Campylobacter pylori).